We begin with the raw amino-acid sequence, 339 residues long: MGDRSPFETDMLTLTRYVMEKGRQAKGTGELTQLLNSMLTAIKAISSAVRKAGLANLYGIAGSVNVTGDEVKKLDVLSNALVINMLQSSYSTCVLVSEENKEAIITSKEKRGKYVVCFDPLDGSSNIDCLASIGTIFAIYRKTSEDEPSEKDALQPGRNIVAAGYALYGSATLVALSTGQGVDLFMLDPALGEFVLVEKDVKIKKKGKIYSLNEGYAKYFDAATTEYVQKKKFPEDGSAPYGARYVGSMVADVHRTLVYGGIFLYPANQKSPKGKLRLLYECNPVAYIIEQAGGLATTGTQPVLDVKPEAIHQRVPLILGSPEDVQEYLTCVQKNQAGR.

The segment at 3 to 10 (DRSPFETD) is important for interaction with ALDOA. Residues V18 and 28-32 (TGELT) each bind AMP. 2 residues coordinate Mg(2+): D69 and E98. An AMP-binding site is contributed by 113 to 114 (KY). 3 residues coordinate Mg(2+): D119, L121, and D122. D122 serves as a coordination point for substrate. An AMP-binding site is contributed by R141. The short motif at 204–208 (KKKGK) is the Nuclear localization signal element. Position 213–216 (213–216 (NEGY)) interacts with substrate. A phosphotyrosine mark is found at Y216 and Y219. Residues 245-249 (YVGSM), Y265, and K275 each bind substrate. E281 contacts Mg(2+).

It belongs to the FBPase class 1 family. As to quaternary structure, homotetramer. Interacts with ALDOA; the interaction blocks inhibition by physiological concentrations of AMP and reduces inhibition by Ca(2+). Interacts with alpha-actinin and F-actin. Requires Mg(2+) as cofactor.

It localises to the cell junction. Its subcellular location is the cytoplasm. It is found in the nucleus. The protein resides in the myofibril. The protein localises to the sarcomere. It localises to the z line. It carries out the reaction beta-D-fructose 1,6-bisphosphate + H2O = beta-D-fructose 6-phosphate + phosphate. It functions in the pathway carbohydrate biosynthesis; gluconeogenesis. Its activity is regulated as follows. Subject to complex allosteric regulation. The enzyme can assume an active R-state, or an inactive T-state. Intermediate conformations may exist. AMP acts as an allosteric inhibitor. Fructose 2,6-bisphosphate acts as a competitive inhibitor. Strongly inhibited by Ca(2+). Its function is as follows. Catalyzes the hydrolysis of fructose 1,6-bisphosphate to fructose 6-phosphate in the presence of divalent cations and probably participates in glycogen synthesis from carbohydrate precursors, such as lactate. This is Fructose-1,6-bisphosphatase isozyme 2 (FBP2) from Bos taurus (Bovine).